The chain runs to 389 residues: uncharacterized protein (389 aa).

Disordered stretches follow at residues 119–156, 180–233, 294–321, and 362–389; these read SSLF…GENQ, PTSK…SSMG, SIPS…TSRT, and PEDM…EIKV. A compositionally biased stretch (polar residues) spans 137 to 155; that stretch reads SPSTINIEKNRHSSNSGEN. Acidic residues predominate over residues 190 to 204; sequence DDGDEEDDTDDEGEA.

This is an uncharacterized protein from Caenorhabditis elegans.